Here is a 24-residue protein sequence, read N- to C-terminus: Pyruvate kinase (24 aa).

It belongs to the pyruvate kinase family. As to quaternary structure, homotetramer. Mg(2+) serves as cofactor. Requires K(+) as cofactor.

It catalyses the reaction pyruvate + ATP = phosphoenolpyruvate + ADP + H(+). It functions in the pathway carbohydrate degradation; glycolysis; pyruvate from D-glyceraldehyde 3-phosphate: step 5/5. This chain is Pyruvate kinase (pyk), found in Clostridium pasteurianum.